Here is a 92-residue protein sequence, read N- to C-terminus: Small ribosomal subunit protein uS19 (92 aa).

Belongs to the universal ribosomal protein uS19 family.

In terms of biological role, protein S19 forms a complex with S13 that binds strongly to the 16S ribosomal RNA. This chain is Small ribosomal subunit protein uS19, found in Acholeplasma laidlawii (strain PG-8A).